We begin with the raw amino-acid sequence, 352 residues long: DNA polymerase IV (352 aa).

The UmuC domain maps to 6–186 (IIHIDMDAFY…LPLGKIPGVG (181 aa)). Mg(2+) is bound by residues D10 and D104. E105 is an active-site residue.

This sequence belongs to the DNA polymerase type-Y family. Monomer. Mg(2+) serves as cofactor.

The protein resides in the cytoplasm. The catalysed reaction is DNA(n) + a 2'-deoxyribonucleoside 5'-triphosphate = DNA(n+1) + diphosphate. In terms of biological role, poorly processive, error-prone DNA polymerase involved in untargeted mutagenesis. Copies undamaged DNA at stalled replication forks, which arise in vivo from mismatched or misaligned primer ends. These misaligned primers can be extended by PolIV. Exhibits no 3'-5' exonuclease (proofreading) activity. May be involved in translesional synthesis, in conjunction with the beta clamp from PolIII. The polypeptide is DNA polymerase IV (Neisseria meningitidis serogroup C / serotype 2a (strain ATCC 700532 / DSM 15464 / FAM18)).